Here is a 1092-residue protein sequence, read N- to C-terminus: Probable cellulose synthase A catalytic subunit 6 [UDP-forming] (1092 aa).

Topologically, residues 1-280 are cytoplasmic; sequence MEASAGLVAG…SSSRINPYRM (280 aa). Cys42, Cys45, Cys61, Cys64, Cys69, Cys72, Cys84, and Cys87 together coordinate Zn(2+). The RING-type; degenerate zinc finger occupies 42-88; sequence CQICGDDVGEGPDGEPFVACNECAFPVCRNCYDYERREGSQACPQCK. A disordered region spans residues 100–123; sequence VAGDEEEDGVDDLEGEFGLDGRED. The span at 103 to 116 shows a compositional bias: acidic residues; sequence DEEEDGVDDLEGEF. Residues 281–301 form a helical membrane-spanning segment; the sequence is IIIIRLVVLGFFFHYRVMHPV. Residues 302-303 lie on the Extracellular side of the membrane; that stretch reads ND. A helical transmembrane segment spans residues 304 to 324; sequence AFALWLISVICEIWFAMSWIL. The Cytoplasmic portion of the chain corresponds to 325–868; the sequence is DQFPKWLPIE…FLERFSYINS (544 aa). UDP-alpha-D-glucose-binding residues include Ser363, Lys369, Glu370, and Asp399. Asp399 is an active-site residue. Residues 453 to 480 adopt a coiled-coil conformation; the sequence is VRERRAMKRDYEEFKVRINALVAKAQKV. A UDP-alpha-D-glucose-binding site is contributed by Lys540. The Mn(2+) site is built by Lys541 and Asp565. Asp792 is a catalytic residue. Residues 869–889 form a helical membrane-spanning segment; that stretch reads IVYPWTSIPLLAYCTLPAICL. Residues 890–901 are Extracellular-facing; it reads LTGKFITPELTN. Residues 902 to 922 form a helical membrane-spanning segment; sequence VASLWFMSLFICIFVTGILEM. The Cytoplasmic portion of the chain corresponds to 923–937; the sequence is RWSGVAIDDWWRNEQ. A helical transmembrane segment spans residues 938 to 958; it reads FWVIGGVSSHLFAVFQGLLKV. The Extracellular segment spans residues 959 to 987; it reads LAGVDTSFTVTSKAGDDEEFSELYTFKWT. A helical membrane pass occupies residues 988-1008; the sequence is TLLIPPTTLLLLNFIGVVAGV. The Cytoplasmic segment spans residues 1009–1019; it reads SNAINNGYESW. The chain crosses the membrane as a helical span at residues 1020–1040; that stretch reads GPLFGKLFFAFWVIVHLYPFL. Topologically, residues 1041–1049 are extracellular; sequence KGLVGRQNR. A helical membrane pass occupies residues 1050–1070; it reads TPTIVIVWSILLASIFSLLWV. At 1071-1092 the chain is on the cytoplasmic side; the sequence is RIDPFLAKNNGPLLEECGLDCN.

This sequence belongs to the glycosyltransferase 2 family. Plant cellulose synthase subfamily. Requires Mn(2+) as cofactor. The cofactor is Zn(2+).

The protein localises to the cell membrane. The enzyme catalyses [(1-&gt;4)-beta-D-glucosyl](n) + UDP-alpha-D-glucose = [(1-&gt;4)-beta-D-glucosyl](n+1) + UDP + H(+). It participates in glycan metabolism; plant cellulose biosynthesis. In terms of biological role, probable catalytic subunit of cellulose synthase terminal complexes ('rosettes'), required for beta-1,4-glucan microfibril crystallization, a major mechanism of the cell wall formation. The protein is Probable cellulose synthase A catalytic subunit 6 [UDP-forming] (CESA6) of Oryza sativa subsp. japonica (Rice).